Here is a 198-residue protein sequence, read N- to C-terminus: Thioredoxin reductase-like selenoprotein T homolog CG3887 (198 aa).

An N-terminal signal peptide occupies residues 1 to 25 (MERLTGRNVALLVLCLCAGYALVFA). The cysteines at positions 49 and 52 are disulfide-linked.

Belongs to the SelWTH family. SELT subfamily.

It carries out the reaction [thioredoxin]-dithiol + NADP(+) = [thioredoxin]-disulfide + NADPH + H(+). Probably has thioredoxin reductase-like oxidoreductase activity. In Drosophila melanogaster (Fruit fly), this protein is Thioredoxin reductase-like selenoprotein T homolog CG3887.